Consider the following 1117-residue polypeptide: Protocadherin-11 X-linked (1117 aa).

The first 23 residues, 1-23, serve as a signal peptide directing secretion; it reads MDLLSGTHIFAVLLACIVFQSGA. Residues 24 to 812 lie on the Extracellular side of the membrane; that stretch reads QEKNYTIREE…ASSPSSDYVK (789 aa). Residues Asn27 and Asn48 are each glycosylated (N-linked (GlcNAc...) asparagine). Cadherin domains lie at 27 to 139, 140 to 249, 250 to 355, 362 to 466, 467 to 570, 571 to 673, and 677 to 795; these read NYTI…APLF, PATV…RPVF, KENE…IPSI, NPIN…APVF, TQPF…SPVF, THNE…KPVF, and SSNY…TPVT. The N-linked (GlcNAc...) asparagine glycan is linked to Asn344. N-linked (GlcNAc...) asparagine glycosylation is present at Asn553. The chain crosses the membrane as a helical span at residues 813-833; sequence IVVAIVAGTITVILVIFITAV. The Cytoplasmic portion of the chain corresponds to 834-1117; the sequence is VRCQQSPHLK…DGNSDPESGK (284 aa). Positions 1029–1039 are enriched in polar residues; sequence TVEIWTHPQPQ. Positions 1029–1117 are disordered; that stretch reads TVEIWTHPQP…DGNSDPESGK (89 aa).

In terms of tissue distribution, expressed in adrenal gland, brain, heart, kidney, lung, prostate, skeletal muscle, testis and thymus.

It localises to the cell membrane. Potential calcium-dependent cell-adhesion protein. The polypeptide is Protocadherin-11 X-linked (PCDH11X) (Sus scrofa (Pig)).